A 141-amino-acid polypeptide reads, in one-letter code: Hemoglobin subunit alpha (141 aa).

The disordered stretch occupies residues V1 to G22. The region spanning V1–R141 is the Globin domain. Residue H58 coordinates O2. H87 provides a ligand contact to heme b.

The protein belongs to the globin family. In terms of assembly, heterotetramer of two alpha chains and two beta chains. Red blood cells.

Involved in oxygen transport from the lung to the various peripheral tissues. The sequence is that of Hemoglobin subunit alpha (HBA) from Vipera aspis (Aspic viper).